A 798-amino-acid polypeptide reads, in one-letter code: RNA cytosine-C(5)-methyltransferase NSUN2 (798 aa).

Positions 1-13 (MGRRNRRNRQRHQ) are enriched in basic residues. Residues 1–30 (MGRRNRRNRQRHQRSTEQRSPAEEEQRRKA) form a disordered region. Over residues 14–30 (RSTEQRSPAEEEQRRKA) the composition is skewed to basic and acidic residues. S-adenosyl-L-methionine is bound by residues 186–192 (CAAPGSK), D217, D244, and D270. Catalysis depends on C323, which acts as the Nucleophile. Disordered stretches follow at residues 476–499 (DEPA…SSKT) and 723–798 (KACD…ESVD). The span at 723–747 (KACDEEHIDEKMDIDGAKEESKELS) shows a compositional bias: basic and acidic residues. The segment covering 751-762 (SGDDEDPKEEDV) has biased composition (acidic residues). The segment covering 763–772 (IDRGVLEHVA) has biased composition (basic and acidic residues).

The protein belongs to the class I-like SAM-binding methyltransferase superfamily. RsmB/NOP family. TRM4 subfamily.

It is found in the nucleus. The protein localises to the nucleolus. The protein resides in the cytoplasm. Its subcellular location is the mitochondrion. It localises to the cytoskeleton. It is found in the spindle. The protein localises to the secreted. The protein resides in the extracellular exosome. It carries out the reaction cytidine(48) in tRNA + S-adenosyl-L-methionine = 5-methylcytidine(48) in tRNA + S-adenosyl-L-homocysteine + H(+). It catalyses the reaction cytidine(49) in tRNA + S-adenosyl-L-methionine = 5-methylcytidine(49) in tRNA + S-adenosyl-L-homocysteine + H(+). The catalysed reaction is cytidine(50) in tRNA + S-adenosyl-L-methionine = 5-methylcytidine(50) in tRNA + S-adenosyl-L-homocysteine + H(+). The enzyme catalyses cytidine(34) in tRNA precursor + S-adenosyl-L-methionine = 5-methylcytidine(34) in tRNA precursor + S-adenosyl-L-homocysteine + H(+). It carries out the reaction a cytidine in mRNA + S-adenosyl-L-methionine = a 5-methylcytidine in mRNA + S-adenosyl-L-homocysteine + H(+). RNA cytosine C(5)-methyltransferase that methylates cytosine to 5-methylcytosine (m5C) in various RNAs, such as tRNAs, mRNAs and some long non-coding RNAs (lncRNAs). Involved in various processes, such as epidermal stem cell differentiation, testis differentiation and maternal to zygotic transition during early development: acts by increasing protein synthesis; cytosine C(5)-methylation promoting tRNA stability and preventing mRNA decay. Methylates cytosine to 5-methylcytosine (m5C) at positions 34 and 48 of intron-containing tRNA(Leu)(CAA) precursors, and at positions 48, 49 and 50 of tRNA(Gly)(GCC) precursors. tRNA methylation is required generation of RNA fragments derived from tRNAs (tRFs). Also mediates C(5)-methylation of mitochondrial tRNAs. Catalyzes cytosine C(5)-methylation of mRNAs, leading to stabilize them and prevent mRNA decay. Cytosine C(5)-methylation of mRNAs also regulates mRNA export. Also mediates cytosine C(5)-methylation of non-coding RNAs, such as vault RNAs (vtRNAs), promoting their processing into regulatory small RNAs. Required for proper spindle assembly and chromosome segregation, independently of its methyltransferase activity. The sequence is that of RNA cytosine-C(5)-methyltransferase NSUN2 from Xenopus tropicalis (Western clawed frog).